The chain runs to 620 residues: Lamin-B2 (620 aa).

Residues 1 to 38 are disordered; the sequence is MSPPSPGRRREQRRPRAAATMATPLPGRAGGPATPLSP. The head stretch occupies residues 1-48; sequence MSPPSPGRRREQRRPRAAATMATPLPGRAGGPATPLSPTRLSRLQEKE. Residues Thr23 and Thr34 each carry the phosphothreonine modification. At Ser37 the chain carries Phosphoserine. In terms of domain architecture, IF rod spans 46 to 402; the sequence is EKEELRELND…KLLEGEEERL (357 aa). The tract at residues 49–83 is coil 1A; sequence ELRELNDRLAHYIDRVRALELENDRLLLKISEKEE. Lys77 participates in a covalent cross-link: Glycyl lysine isopeptide (Lys-Gly) (interchain with G-Cter in SUMO2). Lys81 carries the N6-acetyllysine; alternate modification. A Glycyl lysine isopeptide (Lys-Gly) (interchain with G-Cter in SUMO2); alternate cross-link involves residue Lys81. The tract at residues 84–95 is linker 1; sequence VTTREVSGIKAL. A coil 1B region spans residues 96-229; sequence YESELADARR…DFRKSVFEEE (134 aa). Residues Lys195 and Lys255 each participate in a glycyl lysine isopeptide (Lys-Gly) (interchain with G-Cter in SUMO2) cross-link. The segment at 230–256 is linker 2; the sequence is VRETRRRHERRLVEVDSSRQQEYDFKM. A coil 2 region spans residues 257-400; it reads AQALEELRSQ…YRKLLEGEEE (144 aa). Residues Ser316 and Ser407 each carry the phosphoserine modification. The interval 399–464 is disordered; sequence EERLKLSPSP…GTGGSGGFHL (66 aa). The tract at residues 401 to 620 is tail; sequence RLKLSPSPSS…RTTSRGCYVM (220 aa). Low complexity predominate over residues 404-431; it reads LSPSPSSRVTVSRATSSSSGSLSATGRL. Thr413 carries O-linked (GlcNAc) threonine glycosylation. Residues Ser420, Ser422, Ser424, and Ser426 each carry the phosphoserine modification. Omega-N-methylarginine is present on Arg433. Residues 435-440 carry the Nuclear localization signal motif; it reads KRKRLE. The span at 444 to 453 shows a compositional bias: low complexity; the sequence is PLGSGPSVLG. Residues 462–579 form the LTD domain; sequence FHLAQQASAS…EEVAMRTVKK (118 aa). Residue Lys489 forms a Glycyl lysine isopeptide (Lys-Gly) (interchain with G-Cter in SUMO2) linkage. Ser497 carries the phosphoserine modification. The segment at 581–620 is disordered; it reads SVMRENENGEEEEEEAEFGEEDLFHQQGDPRTTSRGCYVM. A compositionally biased stretch (acidic residues) spans 588-601; sequence NGEEEEEEAEFGEE. Residues 609–620 show a composition bias toward polar residues; the sequence is DPRTTSRGCYVM. Cys617 carries the cysteine methyl ester modification. Residue Cys617 is the site of S-farnesyl cysteine attachment. A propeptide spans 618–620 (removed in mature form); it reads YVM.

Belongs to the intermediate filament family. As to quaternary structure, dimer. Lamin dimers then assemble into dimeric head-to-tail polymers. Ultimately, two head-to-tail polymers assemble laterally into a protofilament with a uniformly shaped rod of 3.5 nm in diameter. Interacts with TMEM43. B-type lamins undergo a series of modifications, such as farnesylation and phosphorylation. Increased phosphorylation of the lamins occurs before envelope disintegration and probably plays a role in regulating lamin associations. Post-translationally, phosphorylation plays a key role in lamin organization, subcellular localization and nuclear envelope disintegration. Phosphorylation by CDK1 at Ser-37 and Ser-407 at the onset of mitosis drives lamin disassembly and nuclear envelope breakdown.

It is found in the nucleus lamina. Its function is as follows. Lamins are intermediate filament proteins that assemble into a filamentous meshwork, and which constitute the major components of the nuclear lamina, a fibrous layer on the nucleoplasmic side of the inner nuclear membrane. Lamins provide a framework for the nuclear envelope, bridging the nuclear envelope and chromatin, thereby playing an important role in nuclear assembly, chromatin organization, nuclear membrane and telomere dynamics. The structural integrity of the lamina is strictly controlled by the cell cycle, as seen by the disintegration and formation of the nuclear envelope in prophase and telophase, respectively. The polypeptide is Lamin-B2 (LMNB2) (Homo sapiens (Human)).